The chain runs to 144 residues: Arginine decarboxylase proenzyme (144 aa).

The active-site Schiff-base intermediate with substrate; via pyruvic acid is Ser80. Pyruvic acid (Ser); by autocatalysis is present on Ser80. The Proton acceptor; for processing activity role is filled by His85. The Proton donor; for catalytic activity role is filled by Cys100.

It belongs to the prokaryotic AdoMetDC family. Type 1 subfamily. In terms of assembly, heterooctamer of four alpha and four beta chains arranged as a tetramer of alpha/beta heterodimers. The cofactor is pyruvate. Post-translationally, is synthesized initially as an inactive proenzyme. Formation of the active enzyme involves a self-maturation process in which the active site pyruvoyl group is generated from an internal serine residue via an autocatalytic post-translational modification. Two non-identical subunits are generated from the proenzyme in this reaction, and the pyruvate is formed at the N-terminus of the alpha chain, which is derived from the carboxyl end of the proenzyme. The post-translation cleavage follows an unusual pathway, termed non-hydrolytic serinolysis, in which the side chain hydroxyl group of the serine supplies its oxygen atom to form the C-terminus of the beta chain, while the remainder of the serine residue undergoes an oxidative deamination to produce ammonia and the pyruvoyl group blocking the N-terminus of the alpha chain.

The enzyme catalyses L-arginine + H(+) = agmatine + CO2. Its pathway is amine and polyamine biosynthesis; agmatine biosynthesis; agmatine from L-arginine: step 1/1. In terms of biological role, specifically catalyzes the decarboxylation of L-arginine to agmatine. Has no S-adenosylmethionine decarboxylase (AdoMetDC) activity. The protein is Arginine decarboxylase proenzyme of Ignicoccus hospitalis (strain KIN4/I / DSM 18386 / JCM 14125).